Here is a 155-residue protein sequence, read N- to C-terminus: UPF0260 protein NGR_c07710 (155 aa).

Belongs to the UPF0260 family.

The protein is UPF0260 protein NGR_c07710 of Sinorhizobium fredii (strain NBRC 101917 / NGR234).